The primary structure comprises 488 residues: F-box protein At3g60790 (488 aa).

The disordered stretch occupies residues Met1 to Pro21. Residues Val49–Asp95 enclose the F-box domain.

In Arabidopsis thaliana (Mouse-ear cress), this protein is F-box protein At3g60790.